A 2214-amino-acid chain; its full sequence is MGAQVSSQKVGAHENTNVATGGSTVNYTTINYYKDSASNAASKLDFSQDPSKFTEPVKDIMLKSAPALNSPNVEACGYSDRVRQITLGNSTITTQEAANAVVAYGEWPSYLDDREANPIDAPTEPDVSSNRFYTLDSVQWTSTSRGWWWKLPDALKDMGMFGQNMYYHYLGRSGYTVHVQCNASKFHQGALGVFAIPEYVMACNTEAKTSYVSYINANPGEKGGVFSSTYNPSEEASEGRKFAALDYLLGCGVLAGNAFVYPHQIINLRTNNSATLVLPYVNSLAIDCMAKHNNWGLVILPLCKLDYAPNSSTEIPITVTIAPMFTEFNGLRNITVPATQGLPTMLTPGSSQFLTSDDFQSPCALPNFDVTPPIHIPGEVFNMMELAEIDSMIPMNSVTGKANTMEMYPIPLDDKGGKTPIFSISLSPASDKRLQYTMLGEILNYYTHWTGSLRFTFLFCGSMMATGKILLSYSPPGAKPPTTRKDAMLGTHIIWDLGLQSSCTMLAPWISNTVYRRCIKDDFTEGGYITCFYQTRIVVPSGTPTSMFMLAFVSACPDFSVRLLRDTNHISQRTLFARAQGIEETIDTVISNALQLSQPKPQKQLTAQSTPSTSGVNSQEVPALTAVETGVSGQAIPSDVIETRHVVNYKTRSESTLESFFGRSACVTMLEVENFNATTEADKKKQFTTWAITYTDTVQLRRKLEFFTYSRFDLEMTFVITERYYTSNTGYARNQVYQLMYIPPGAPRPTAWDDYTWQSSSNPSVFYTYGSAPPRISIPYVGIANAYSHFYDGFARVPLKDETVDSGDTYYGLVTINDFGTLAVRVVNEFNPARIISKIRVYMKPKHVRCWCPRPPRAVPYRGEGVDFKQDSITPLIAVENINTFGGFGHQNMAVYVAGYKICNYHLATPEDHDNAVRVLWNRDLMIVSSRAQGSDTIARCNCRTGVYYCKSMKKYYPVTVTEPTFQYMEANDYYPARYQTHMLLGMGFAEPGDCGGILRCNHGVMGIVTAGGNGIVAFADIRDLWVYEEEAMEQGITSYIESLGAAFGSGFTNQIGEKVSELTSMVTSSITEKLLKTLIKIISTLVIISRNYEDTTTVLATLALLGCDYSPWQWIKKKACDVLELPYVMRQGDSWLKKFTEACNAAKGLEWISNKISKFIDWLKERIIPEAKDKVEFITKLKQLGILENQINTIHQSCPSQEQQEILFNNVRWLAIQSRRFAPLYAVEAKRISKLENTINNYIQFKSKHRIEPVCMLIHGSPGTGKSIATSLIGRAIAEKENTSTYSLPPDPTHFDGYKQQGVVIMDDLNQNPDGNDMKLFCQMVSTVEFIPPMASLEEKGILFTSDYVLASTNSHTITPPTVSHSDALNRRFAFDMEVYTMSEHSIKGKLNMATATQLCKDCPQPANFKKCCPLVCGKALQLMDKNTRQRFTLDEITTLVINERNRRANIGNCMEALFQGPIQYRDVMIDIKETPAPDYINDLLQSVDSQELRDYCEKKGWIARLNNDLVMERNLNRAMTILQAVTTFAAVAAVVYVMYKLFAGHQGAYTGLPNKKPSVPTVRTAKVQGPGFDYAVAMAKRNILTATTSKGEFTMLGVHDNVAILPTHAAPGDSIVIDGKEVEVLDAEALEDQSGTNLEITIVKLKRNEKFRDIRPHIPTQITETNDGVLIVNTSKYPNMYVPVGAVTEQGYLNLGGRQTARTLMYNFPTRAGQCGGVITCTGKVIGMHVGGNGSHGFAAALKRSYFTQSQGEIQWMRPSKEVGYPVINAPSKTKLEPSVFHHVFEGAKEPAVLTKNDPRLKTDFEEAIFSKYVGNKITEVDEYMKEAVDHYAGQLMSLDINTEQMCLEDAMYGTDGLEALDLSTSAGYPYVAMGKKKRDILNKQTRDTKEMQRLLDTYGINLPLVTYVKDELRSKTKVEQGKSRLIEASSLNDSVAMRMAFGNLYAAFHKNPGVVTGSAVGCDPDLFWSKIPVLMEEKLFAFDYTGYDASLSPAWFEALKMVLEKIGFGDRVDYIDYLNHSHHLYKNKTYCVKGGMPSGCSGTSIFNSMINNLIIRTLLLKTYKGIDLDHLKMIAYGDDVIASYPHEVDASLLAQSGKDYGLTMTPADKSATFETVTWENVTFLKRFFRADEKYPFLVHPVMPMKEIHESIRWTKDPRNTQDHVRSLCLLAWHNGEEEYNKFLAKVRSVPIGRALLLPEYSTLYRRWLDSF.

Disordered stretches follow at residues 1 to 21 (MGAQ…VATG) and 600 to 619 (KPQK…VNSQ). Gly2 is lipidated: N-myristoyl glycine; by host. The Cytoplasmic portion of the chain corresponds to 2-1525 (GAQVSSQKVG…NLNRAMTILQ (1524 aa)). 2 amphipathic alpha-helix regions span residues 580 to 601 (QGIE…QPKP) and 581 to 601 (GIEE…QPKP). A compositionally biased stretch (polar residues) spans 606-619 (TAQSTPSTSGVNSQ). Catalysis depends on for protease 2A activity residues His906 and Asp924. Positions 941 and 943 each coordinate Zn(2+). Cys995 (for protease 2A activity) is an active-site residue. Zn(2+) contacts are provided by Cys1001 and His1003. The membrane-binding stretch occupies residues 1133–1205 (GDSWLKKFTE…HQSCPSQEQQ (73 aa)). An oligomerization region spans residues 1133 to 1271 (GDSWLKKFTE…SPGTGKSIAT (139 aa)). Residues 1154–1158 (SNKIS) form an RNA-binding region. One can recognise an SF3 helicase domain in the interval 1237–1393 (ENTINNYIQF…SEHSIKGKLN (157 aa)). 1261–1268 (GSPGTGKS) lines the ATP pocket. Residues Cys1401, Cys1404, Cys1413, and Cys1418 each contribute to the Zn(2+) site. Residues 1401–1418 (CKDCPQPANFKKCCPLVC) form a C4-type zinc finger. Residues 1445–1452 (ERNRRANI) are RNA-binding. An oligomerization region spans residues 1456-1461 (MEALFQ). Residues 1526-1541 (AVTTFAAVAAVVYVMY) lie within the membrane without spanning it. Residues 1542–2214 (KLFAGHQGAY…TLYRRWLDSF (673 aa)) are Cytoplasmic-facing. Tyr1551 is subject to O-(5'-phospho-RNA)-tyrosine. Residues 1571 to 1749 (GPGFDYAVAM…FAAALKRSYF (179 aa)) form the Peptidase C3 domain. Active-site for protease 3C activity residues include His1610, Glu1641, and Cys1717. The RdRp catalytic domain occupies 1980–2095 (EKLFAFDYTG…SYPHEVDASL (116 aa)). Residues Asp1986 and Asp2081 each coordinate Mg(2+).

Belongs to the picornaviruses polyprotein family. As to quaternary structure, interacts with capsid protein VP1 and capsid protein VP3 to form heterotrimeric protomers. In terms of assembly, interacts with capsid protein VP0, and capsid protein VP3 to form heterotrimeric protomers. Five protomers subsequently associate to form pentamers which serve as building blocks for the capsid. Interacts with capsid protein VP2, capsid protein VP3 and capsid protein VP4 following cleavage of capsid protein VP0. Interacts with capsid protein VP1 and capsid protein VP3 in the mature capsid. As to quaternary structure, interacts with capsid protein VP0 and capsid protein VP1 to form heterotrimeric protomers. Five protomers subsequently associate to form pentamers which serve as building blocks for the capsid. Interacts with capsid protein VP4 in the mature capsid. Interacts with protein 2C; this interaction may be important for virion morphogenesis. In terms of assembly, interacts with capsid protein VP1 and capsid protein VP3. Homodimer. As to quaternary structure, homohexamer; forms a hexameric ring structure with 6-fold symmetry characteristic of AAA+ ATPases. Interacts (via N-terminus) with host RTN3 (via reticulon domain); this interaction is important for viral replication. Interacts with capsid protein VP3; this interaction may be important for virion morphogenesis. In terms of assembly, interacts with protein 3CD. Homodimer. Interacts with host GBF1. Interacts (via GOLD domain) with host ACBD3 (via GOLD domain); this interaction allows the formation of a viral protein 3A/ACBD3 heterotetramer with a 2:2 stoichiometry, which will stimulate the recruitment of host PI4KB in order to synthesize PI4P at the viral RNA replication sites. As to quaternary structure, interacts with RNA-directed RNA polymerase. In terms of assembly, interacts with protein 3AB and with RNA-directed RNA polymerase. Interacts with Viral protein genome-linked and with protein 3CD. Requires Mg(2+) as cofactor. Specific enzymatic cleavages in vivo by the viral proteases yield processing intermediates and the mature proteins. In terms of processing, myristoylation is required for the formation of pentamers during virus assembly. Further assembly of 12 pentamers and a molecule of genomic RNA generates the provirion. Post-translationally, during virion maturation, immature virions are rendered infectious following cleavage of VP0 into VP4 and VP2. This maturation seems to be an autocatalytic event triggered by the presence of RNA in the capsid and it is followed by a conformational change infectious virion. Myristoylation is required during RNA encapsidation and formation of the mature virus particle. In terms of processing, VPg is uridylylated by the polymerase into VPg-pUpU. This acts as a nucleotide-peptide primer for the genomic RNA replication.

The protein resides in the virion. It is found in the host cytoplasm. The protein localises to the host cytoplasmic vesicle membrane. Its subcellular location is the host nucleus. It carries out the reaction a ribonucleoside 5'-triphosphate + H2O = a ribonucleoside 5'-diphosphate + phosphate + H(+). It catalyses the reaction Selective cleavage of Tyr-|-Gly bond in the picornavirus polyprotein.. The catalysed reaction is RNA(n) + a ribonucleoside 5'-triphosphate = RNA(n+1) + diphosphate. The enzyme catalyses Selective cleavage of Gln-|-Gly bond in the poliovirus polyprotein. In other picornavirus reactions Glu may be substituted for Gln, and Ser or Thr for Gly.. Replication or transcription is subject to high level of random mutations by the nucleotide analog ribavirin. Its function is as follows. Forms an icosahedral capsid of pseudo T=3 symmetry with capsid proteins VP2 and VP3. The capsid is 300 Angstroms in diameter, composed of 60 copies of each capsid protein and enclosing the viral positive strand RNA genome. Capsid protein VP1 mainly forms the vertices of the capsid. Capsid protein VP1 interacts with host cell receptor to provide virion attachment to target host cells. This attachment induces virion internalization. Tyrosine kinases are probably involved in the entry process. After binding to its receptor, the capsid undergoes conformational changes. Capsid protein VP1 N-terminus (that contains an amphipathic alpha-helix) and capsid protein VP4 are externalized. Together, they shape a pore in the host membrane through which viral genome is translocated to host cell cytoplasm. Functionally, forms an icosahedral capsid of pseudo T=3 symmetry with capsid proteins VP2 and VP3. The capsid is 300 Angstroms in diameter, composed of 60 copies of each capsid protein and enclosing the viral positive strand RNA genome. Lies on the inner surface of the capsid shell. After binding to the host receptor, the capsid undergoes conformational changes. Capsid protein VP4 is released, Capsid protein VP1 N-terminus is externalized, and together, they shape a pore in the host membrane through which the viral genome is translocated into the host cell cytoplasm. In terms of biological role, component of immature procapsids, which is cleaved into capsid proteins VP4 and VP2 after maturation. Allows the capsid to remain inactive before the maturation step. Its function is as follows. Cysteine protease that cleaves viral polyprotein and specific host proteins. It is responsible for the autocatalytic cleavage between the P1 and P2 regions, which is the first cleavage occurring in the polyprotein. Also cleaves the host translation initiation factor EIF4G1, in order to shut down the capped cellular mRNA translation. Inhibits the host nucleus-cytoplasm protein and RNA trafficking by cleaving host members of the nuclear pores. Counteracts stress granule formation probably by antagonizing its assembly or promoting its dissassembly. Cleaves and inhibits host IFIH1/MDA5, thereby inhibiting the type-I IFN production and the establishment of the antiviral state. Cleaves and inhibits host MAVS, thereby inhibiting the type-I IFN production and the establishment of the antiviral state. Functionally, plays an essential role in the virus replication cycle by acting as a viroporin. Creates a pore in the host endoplasmic reticulum and as a consequence releases Ca2+ in the cytoplasm of infected cell. In turn, high levels of cytoplasmic calcium may trigger membrane trafficking and transport of viral ER-associated proteins to viroplasms, sites of viral genome replication. Induces and associates with structural rearrangements of intracellular membranes. Displays RNA-binding, nucleotide binding and NTPase activities. May play a role in virion morphogenesis and viral RNA encapsidation by interacting with the capsid protein VP3. In terms of biological role, localizes the viral replication complex to the surface of membranous vesicles. Together with protein 3CD binds the Cis-Active RNA Element (CRE) which is involved in RNA synthesis initiation. Acts as a cofactor to stimulate the activity of 3D polymerase, maybe through a nucleid acid chaperone activity. Its function is as follows. Localizes the viral replication complex to the surface of membranous vesicles. It inhibits host cell endoplasmic reticulum-to-Golgi apparatus transport and causes the disassembly of the Golgi complex, possibly through GBF1 interaction. This would result in depletion of MHC, trail receptors and IFN receptors at the host cell surface. Plays an essential role in viral RNA replication by recruiting ACBD3 and PI4KB at the viral replication sites, thereby allowing the formation of the rearranged membranous structures where viral replication takes place. Functionally, acts as a primer for viral RNA replication and remains covalently bound to viral genomic RNA. VPg is uridylylated prior to priming replication into VPg-pUpU. The oriI viral genomic sequence may act as a template for this. The VPg-pUpU is then used as primer on the genomic RNA poly(A) by the RNA-dependent RNA polymerase to replicate the viral genome. During genome replication, the VPg-RNA linkage is removed by the host TDP2, thereby accelerating replication. During the late stage of the replication cycle, host TDP2 is excluded from sites of viral RNA synthesis and encapsidation, allowing for the generation of progeny virions. Involved in the viral replication complex and viral polypeptide maturation. It exhibits protease activity with a specificity and catalytic efficiency that is different from protease 3C. Protein 3CD lacks polymerase activity. Protein 3CD binds to the 5'UTR of the viral genome. In terms of biological role, replicates the viral genomic RNA on the surface of intracellular membranes. May form linear arrays of subunits that propagate along a strong head-to-tail interaction called interface-I. Covalently attaches UMP to a tyrosine of VPg, which is used to prime RNA synthesis. The positive stranded RNA genome is first replicated at virus induced membranous vesicles, creating a dsRNA genomic replication form. This dsRNA is then used as template to synthesize positive stranded RNA genomes. ss(+)RNA genomes are either translated, replicated or encapsidated. Its function is as follows. Major viral protease that mediates proteolytic processing of the polyprotein. Cleaves host EIF5B, contributing to host translation shutoff. Also cleaves host PABPC1, contributing to host translation shutoff. Cleaves host NLRP1, triggers host N-glycine-mediated degradation of the autoinhibitory NLRP1 N-terminal fragment. The polypeptide is Genome polyprotein (Coxsackievirus A24 (strain EH24/70)).